Consider the following 102-residue polypeptide: Large ribosomal subunit protein bL21 (102 aa).

Basic residues predominate over residues 77 to 88; the sequence is KPKKHTHTKQGH. The tract at residues 77 to 102 is disordered; sequence KPKKHTHTKQGHRQPYTKVTINKINA. Positions 93–102 are enriched in polar residues; that stretch reads TKVTINKINA.

Belongs to the bacterial ribosomal protein bL21 family. In terms of assembly, part of the 50S ribosomal subunit. Contacts protein L20.

Functionally, this protein binds to 23S rRNA in the presence of protein L20. This is Large ribosomal subunit protein bL21 from Limosilactobacillus reuteri (strain DSM 20016) (Lactobacillus reuteri).